Consider the following 842-residue polypeptide: Molybdenum cofactor sulfurase (842 aa).

Lys-236 is subject to N6-(pyridoxal phosphate)lysine. The active site involves Cys-402. The tract at residues 637-680 (PGSQHGDAQRSSKARLQKHQITTDQESDVQEVHPGSGTTTDSTW) is disordered. Residues 663–831 (SDVQEVHPGS…AARGDVAYPT (169 aa)) form the MOSC domain.

It belongs to the class-V pyridoxal-phosphate-dependent aminotransferase family. MOCOS subfamily. Requires pyridoxal 5'-phosphate as cofactor.

It catalyses the reaction Mo-molybdopterin + L-cysteine + AH2 = thio-Mo-molybdopterin + L-alanine + A + H2O. The protein operates within cofactor biosynthesis; molybdopterin biosynthesis. Functionally, sulfurates the molybdenum cofactor. Sulfation of molybdenum is essential for xanthine dehydrogenase (XDH) and aldehyde oxidase (ADO) enzymes in which molybdenum cofactor is liganded by 1 oxygen and 1 sulfur atom in active form. This Pyricularia oryzae (strain 70-15 / ATCC MYA-4617 / FGSC 8958) (Rice blast fungus) protein is Molybdenum cofactor sulfurase.